A 294-amino-acid polypeptide reads, in one-letter code: Elongation factor Ts (294 aa).

Residues 81-84 (TDFV) are involved in Mg(2+) ion dislocation from EF-Tu.

This sequence belongs to the EF-Ts family.

It localises to the cytoplasm. Associates with the EF-Tu.GDP complex and induces the exchange of GDP to GTP. It remains bound to the aminoacyl-tRNA.EF-Tu.GTP complex up to the GTP hydrolysis stage on the ribosome. This is Elongation factor Ts (tsf) from Mycoplasmopsis pulmonis (strain UAB CTIP) (Mycoplasma pulmonis).